The primary structure comprises 1050 residues: Calmodulin-binding transcription activator 2 (1050 aa).

Residues 15-141 constitute a DNA-binding region (CG-1); the sequence is IKQLLSEAQH…YLEVKGNRMS (127 aa). Polar residues-rich tracts occupy residues 141–171 and 183–196; these read STSG…SSIL and SRQA…NPEP. Disordered regions lie at residues 141–196 and 223–246; these read STSG…NPEP and NRDG…SGDV. ANK repeat units follow at residues 661–690 and 694–723; these read DGQG…SINF and NGWS…DAGA. IQ domains follow at residues 870–899 and 893–922; these read VHAA…RIVK and IRQR…SVGL. The calmodulin-binding stretch occupies residues 918-940; sequence WSVGLLEKIILRWRRKGSGLRGF. Residues 957–985 adopt a coiled-coil conformation; the sequence is QEDDYDFLKEGRKQTEERLQKALTRVKSM. Ser984 carries the phosphoserine modification.

Belongs to the CAMTA family. As to expression, expressed in roots, stems, old leaves, petals, sepals, top of carpels, stigmas, stamen filaments, anthers and siliques, but not in pollen.

Its subcellular location is the nucleus. Transcription activator that binds to the DNA consensus sequence 5'-[ACG]CGCG[GTC]-3'. Regulates transcriptional activity in response to calcium signals. Binds calmodulin in a calcium-dependent manner. Involved in freezing tolerance in association with CAMTA1 and CAMTA3. Contributes together with CAMTA1 and CAMTA3 to the positive regulation of the cold-induced expression of DREB1A/CBF3, DREB1B/CBF1 and DREB1C/CBF2. Involved together with CAMTA3 and CAMTA4 in the positive regulation of a general stress response. Involved in tolerance to aluminum. Binds to the promoter of ALMT1 transporter and contributes to the positive regulation of aluminum-induced expression of ALMT1. The polypeptide is Calmodulin-binding transcription activator 2 (Arabidopsis thaliana (Mouse-ear cress)).